Consider the following 66-residue polypeptide: Putative alpha-neurotoxin RjAa16 (66 aa).

Residues 1-60 (KEGYPVDWGNCKYECMSDAYCKDLCVDRKAKSGYCYKLNWFCYCEGLPDDSPIKTNGHCR) enclose the LCN-type CS-alpha/beta domain. 4 disulfides stabilise this stretch: Cys-11-Cys-59, Cys-15-Cys-35, Cys-21-Cys-42, and Cys-25-Cys-44.

This sequence belongs to the long (4 C-C) scorpion toxin superfamily. Sodium channel inhibitor family. Alpha subfamily. Expressed by the venom gland.

Its subcellular location is the secreted. Its function is as follows. Alpha toxins bind voltage-independently at site-3 of sodium channels (Nav) and inhibits the inactivation of the activated channels, thereby blocking neuronal transmission. The chain is Putative alpha-neurotoxin RjAa16 from Rhopalurus junceus (Caribbean blue scorpion).